A 703-amino-acid polypeptide reads, in one-letter code: RING finger protein 214 (703 aa).

3 disordered regions span residues 1-59 (MAAS…TITK), 104-134 (GSQS…VTRS), and 146-197 (SRNC…SSSL). The residue at position 2 (A2) is an N-acetylalanine. Phosphoserine is present on residues S15, S40, S47, and S54. Polar residues predominate over residues 37 to 59 (TKDSAQKQKNSPLLSVSSQTITK). Phosphoserine is present on residues S176 and S196. The stretch at 220–379 (QDIEKNLDKM…AEKEAELHLT (160 aa)) forms a coiled coil. The tract at residues 486-552 (FPILNPALSQ…SAETPRPQPV (67 aa)) is disordered. Over residues 493-504 (LSQPSQPSSPLP) the composition is skewed to low complexity. Residues S497, S511, and S516 each carry the phosphoserine modification. The segment covering 523 to 536 (PHMPPAASIPPPPG) has biased composition (pro residues). Residues 658–700 (CLMCQKLVQPSELHPMACTHVLHKECIKFWAQTNTNDTCPFCP) form an RING-type; atypical zinc finger.

This chain is RING finger protein 214 (RNF214), found in Homo sapiens (Human).